A 142-amino-acid polypeptide reads, in one-letter code: Peptidyl-prolyl cis-trans isomerase FKBP2 (142 aa).

The first 21 residues, 1–21 (MRLSWFRVLTVLSICLSAVAT), serve as a signal peptide directing secretion. A PPIase FKBP-type domain is found at 49-137 (GDVLHMHYTG…VFEVELLKIE (89 aa)). Residues 139–142 (RTEL) carry the Prevents secretion from ER motif.

The protein belongs to the FKBP-type PPIase family. FKBP2 subfamily. In terms of assembly, interacts with ARFGEF1/BIG1 and the C-terminal of EPB41L2. T-cells and thymus.

It localises to the endoplasmic reticulum membrane. It catalyses the reaction [protein]-peptidylproline (omega=180) = [protein]-peptidylproline (omega=0). Inhibited by both FK506 and rapamycin. Functionally, PPIases accelerate the folding of proteins. It catalyzes the cis-trans isomerization of proline imidic peptide bonds in oligopeptides. This is Peptidyl-prolyl cis-trans isomerase FKBP2 (FKBP2) from Homo sapiens (Human).